A 243-amino-acid polypeptide reads, in one-letter code: Probable transcriptional regulatory protein Bpet3099 (243 aa).

Residues 1 to 21 (MAGHSKWANIQHRKGRQDAKR) are disordered.

The protein belongs to the TACO1 family.

Its subcellular location is the cytoplasm. This is Probable transcriptional regulatory protein Bpet3099 from Bordetella petrii (strain ATCC BAA-461 / DSM 12804 / CCUG 43448).